The sequence spans 243 residues: I/6 autoantigen (243 aa).

Positions 110–145 (LSVEEVDALFNALDSDNRGYVSVDEFMDALYGEEGR) constitute an EF-hand domain. The disordered stretch occupies residues 166 to 243 (PSWRMRPTPK…PPKQKAGCGC (78 aa)). A compositionally biased stretch (basic residues) spans 176-196 (PTRKLRQKRKREQGQKRKQGQ). Repeat copies occupy residues 181–188 (RQKRKREQ), 189–196 (GQKRKQGQ), 197–204 (RQKQEQGQ), 205–212 (RQKREQGQ), 213–220 (RQKQEQGQ), and 221–228 (KRKRERGG). The tract at residues 181–228 (RQKRKREQGQKRKQGQRQKQEQGQRQKREQGQRQKQEQGQKRKRERGG) is 6 X 8 AA tandem repeats. Residues 198-220 (QKQEQGQRQKREQGQRQKQEQGQ) are compositionally biased toward basic and acidic residues.

The protein localises to the cytoplasm. Its subcellular location is the cytoskeleton. Microtubule-associated protein that may be involved in cross-linking microtubules. The sequence is that of I/6 autoantigen from Trypanosoma brucei brucei.